Reading from the N-terminus, the 96-residue chain is UPF0235 protein KPK_0722 (96 aa).

Belongs to the UPF0235 family.

The polypeptide is UPF0235 protein KPK_0722 (Klebsiella pneumoniae (strain 342)).